A 224-amino-acid polypeptide reads, in one-letter code: Small ribosomal subunit protein uS13 (224 aa).

Basic and acidic residues predominate over residues 1 to 17 (MSEKTDKTEKKQKKAEE). Disordered regions lie at residues 1–64 (MSEK…AEEK) and 184–224 (HERG…EDKK). Low complexity-rich tracts occupy residues 20 to 30 (ETASAEAAPAK) and 38 to 47 (AKPAEGAPAD). Residues 210–224 (KKGEQGGAAKKEDKK) are compositionally biased toward basic and acidic residues.

This sequence belongs to the universal ribosomal protein uS13 family. In terms of assembly, part of the 30S ribosomal subunit. Forms a loose heterodimer with protein S19. Forms two bridges to the 50S subunit in the 70S ribosome.

Functionally, located at the top of the head of the 30S subunit, it contacts several helices of the 16S rRNA. In the 70S ribosome it contacts the 23S rRNA (bridge B1a) and protein L5 of the 50S subunit (bridge B1b), connecting the 2 subunits; these bridges are implicated in subunit movement. The protein is Small ribosomal subunit protein uS13 of Methanocella arvoryzae (strain DSM 22066 / NBRC 105507 / MRE50).